Consider the following 112-residue polypeptide: Frizzy aggregation protein FrzB (112 aa).

Its function is as follows. Necessary for proper aggregation of cells to form fruiting bodies. FRZ genes define a system of signal transduction analogous to the enterobacterial chemotaxis systems. The protein is Frizzy aggregation protein FrzB (frzB) of Myxococcus xanthus.